We begin with the raw amino-acid sequence, 65 residues long: Translational regulator CsrA (65 aa).

Belongs to the CsrA/RsmA family. As to quaternary structure, homodimer; the beta-strands of each monomer intercalate to form a hydrophobic core, while the alpha-helices form wings that extend away from the core.

Its subcellular location is the cytoplasm. Its function is as follows. A key translational regulator that binds mRNA to regulate translation initiation and/or mRNA stability. Mediates global changes in gene expression, shifting from rapid growth to stress survival by linking envelope stress, the stringent response and the catabolite repression systems. Usually binds in the 5'-UTR; binding at or near the Shine-Dalgarno sequence prevents ribosome-binding, repressing translation, binding elsewhere in the 5'-UTR can activate translation and/or stabilize the mRNA. Its function is antagonized by small RNA(s). The polypeptide is Translational regulator CsrA (Pseudomonas putida (strain ATCC 47054 / DSM 6125 / CFBP 8728 / NCIMB 11950 / KT2440)).